We begin with the raw amino-acid sequence, 67 residues long: Large ribosomal subunit protein bL32 (67 aa).

The span at Met1–Gln19 shows a compositional bias: basic residues. Positions Met1–Ala22 are disordered.

The protein belongs to the bacterial ribosomal protein bL32 family.

In Kocuria rhizophila (strain ATCC 9341 / DSM 348 / NBRC 103217 / DC2201), this protein is Large ribosomal subunit protein bL32.